A 249-amino-acid chain; its full sequence is Purine nucleoside phosphorylase ML0918 (249 aa).

Zn(2+) is bound by residues histidine 72, cysteine 109, and histidine 126.

The protein belongs to the purine nucleoside phosphorylase YfiH/LACC1 family. As to quaternary structure, homodimer. It depends on Cu(2+) as a cofactor. Requires Zn(2+) as cofactor.

It carries out the reaction adenosine + phosphate = alpha-D-ribose 1-phosphate + adenine. It catalyses the reaction S-methyl-5'-thioadenosine + phosphate = 5-(methylsulfanyl)-alpha-D-ribose 1-phosphate + adenine. The catalysed reaction is inosine + phosphate = alpha-D-ribose 1-phosphate + hypoxanthine. The enzyme catalyses adenosine + H2O + H(+) = inosine + NH4(+). Purine nucleoside enzyme that catalyzes the phosphorolysis of adenosine and inosine nucleosides, yielding D-ribose 1-phosphate and the respective free bases, adenine and hypoxanthine. Also catalyzes the phosphorolysis of S-methyl-5'-thioadenosine into adenine and S-methyl-5-thio-alpha-D-ribose 1-phosphate. Also has adenosine deaminase activity. In Mycobacterium leprae (strain TN), this protein is Purine nucleoside phosphorylase ML0918.